Reading from the N-terminus, the 343-residue chain is Aspartate carbamoyltransferase catalytic subunit (343 aa).

Carbamoyl phosphate contacts are provided by Arg91 and Thr92. Position 119 (Lys119) interacts with L-aspartate. Carbamoyl phosphate-binding residues include Arg141, His171, and Gln174. 2 residues coordinate L-aspartate: Arg204 and Arg259. 2 residues coordinate carbamoyl phosphate: Gly300 and Pro301.

Belongs to the aspartate/ornithine carbamoyltransferase superfamily. ATCase family. As to quaternary structure, heterododecamer (2C3:3R2) of six catalytic PyrB chains organized as two trimers (C3), and six regulatory PyrI chains organized as three dimers (R2).

The catalysed reaction is carbamoyl phosphate + L-aspartate = N-carbamoyl-L-aspartate + phosphate + H(+). It participates in pyrimidine metabolism; UMP biosynthesis via de novo pathway; (S)-dihydroorotate from bicarbonate: step 2/3. In terms of biological role, catalyzes the condensation of carbamoyl phosphate and aspartate to form carbamoyl aspartate and inorganic phosphate, the committed step in the de novo pyrimidine nucleotide biosynthesis pathway. The polypeptide is Aspartate carbamoyltransferase catalytic subunit (Burkholderia thailandensis (strain ATCC 700388 / DSM 13276 / CCUG 48851 / CIP 106301 / E264)).